Consider the following 79-residue polypeptide: Hematopoietic cell signal transducer (79 aa).

An N-terminal signal peptide occupies residues 1–18 (MIHPGHILFLLLLPVAAA). The Extracellular segment spans residues 19 to 34 (QTTPGSCSGCGSLSLP). Residues 35-55 (LLAGLVAADAVASPLIVGAVF) form a helical membrane-spanning segment. The Cytoplasmic segment spans residues 56–79 (LCARPRRSPAQGDGKVYINMPGRG). Tyr-72 carries the phosphotyrosine modification. Residues 72–74 (YIN) are GRB2 binding site. Positions 72-75 (YINM) are PIK3R1 binding site.

Belongs to the DAP10 family. As to quaternary structure, homodimer; Disulfide-linked. Heterohexamer composed of four subunits of HCST/DAP10 and two subunits of KLRK1. Interacts (via transmembrane domain) with KLRK1 (via transmembrane domain); the interaction is required for KLRK1 NK cell surface and induces NK cell-mediated cytotoxicity. Interacts with PIK3R1 and GRB2. Interacts with CLEC5A. Forms an CLEC5A/TYROBP/HCST trimolecular complex depending almost solely on TYROBP. Interacts with CD300H. In terms of processing, phosphorylated; PIK3R1 and GRB2 associate specifically with tyrosine-phosphorylated HCST. O-glycosylated.

It localises to the membrane. Functionally, transmembrane adapter protein which associates with KLRK1 to form an activation receptor KLRK1-HCST in lymphoid and myeloid cells; this receptor plays a major role in triggering cytotoxicity against target cells expressing cell surface ligands such as MHC class I chain-related MICA and MICB, and UL16-binding proteins (ULBPs); these ligands are up-regulated by stress conditions and pathological state such as viral infection and tumor transformation. Functions as a docking site for PI3-kinase PIK3R1 and GRB2. Interaction of ULBPs with KLRK1-HCST triggers calcium mobilization and activation of the PIK3R1, MAP2K/ERK, and JAK2/STAT5 signaling pathways. Both PIK3R1 and GRB2 are required for full KLRK1-HCST-mediated activation and ultimate killing of target cells. In NK cells, KLRK1-HCST signaling directly induces cytotoxicity and enhances cytokine production initiated via DAP12/TYROBP-associated receptors. In T-cells, it provides primarily costimulation for TCR-induced signals. KLRK1-HCST receptor plays a role in immune surveillance against tumors and is required for cytolysis of tumors cells; indeed, melanoma cells that do not express KLRK1 ligands escape from immune surveillance mediated by NK cells. This is Hematopoietic cell signal transducer (HCST) from Macaca mulatta (Rhesus macaque).